Consider the following 352-residue polypeptide: Quinolinate synthase (352 aa).

Positions 48 and 69 each coordinate iminosuccinate. C114 contributes to the [4Fe-4S] cluster binding site. Iminosuccinate is bound by residues 140–142 and S157; that span reads YAN. Residue C201 coordinates [4Fe-4S] cluster. Iminosuccinate is bound by residues 227–229 and T244; that span reads HPE. Residue C298 participates in [4Fe-4S] cluster binding.

It belongs to the quinolinate synthase family. Type 1 subfamily. [4Fe-4S] cluster serves as cofactor.

Its subcellular location is the cytoplasm. It catalyses the reaction iminosuccinate + dihydroxyacetone phosphate = quinolinate + phosphate + 2 H2O + H(+). It functions in the pathway cofactor biosynthesis; NAD(+) biosynthesis; quinolinate from iminoaspartate: step 1/1. In terms of biological role, catalyzes the condensation of iminoaspartate with dihydroxyacetone phosphate to form quinolinate. The chain is Quinolinate synthase from Pseudomonas putida (strain ATCC 700007 / DSM 6899 / JCM 31910 / BCRC 17059 / LMG 24140 / F1).